An 879-amino-acid polypeptide reads, in one-letter code: Alanine--tRNA ligase (879 aa).

Zn(2+) is bound by residues His-566, His-570, Cys-668, and His-672.

The protein belongs to the class-II aminoacyl-tRNA synthetase family. Requires Zn(2+) as cofactor.

It localises to the cytoplasm. The catalysed reaction is tRNA(Ala) + L-alanine + ATP = L-alanyl-tRNA(Ala) + AMP + diphosphate. Functionally, catalyzes the attachment of alanine to tRNA(Ala) in a two-step reaction: alanine is first activated by ATP to form Ala-AMP and then transferred to the acceptor end of tRNA(Ala). Also edits incorrectly charged Ser-tRNA(Ala) and Gly-tRNA(Ala) via its editing domain. The sequence is that of Alanine--tRNA ligase from Clostridium novyi (strain NT).